The sequence spans 354 residues: Fructose-bisphosphate aldolase (354 aa).

Ser-50 lines the D-glyceraldehyde 3-phosphate pocket. Asp-83 functions as the Proton donor in the catalytic mechanism. 4 residues coordinate Zn(2+): His-84, Asp-105, Glu-142, and His-198. A dihydroxyacetone phosphate-binding site is contributed by Gly-199. His-232 serves as a coordination point for Zn(2+). Residues 233-235 (GSS) and 275-278 (NIDT) contribute to the dihydroxyacetone phosphate site.

The protein belongs to the class II fructose-bisphosphate aldolase family. In terms of assembly, homodimer. Zn(2+) is required as a cofactor.

It carries out the reaction beta-D-fructose 1,6-bisphosphate = D-glyceraldehyde 3-phosphate + dihydroxyacetone phosphate. The protein operates within carbohydrate biosynthesis; Calvin cycle. It participates in carbohydrate degradation; glycolysis; D-glyceraldehyde 3-phosphate and glycerone phosphate from D-glucose: step 4/4. Its activity is regulated as follows. Activity is stimulated by Fe(2+) in autotrophically grown cells. Its function is as follows. Catalyzes the aldol condensation of dihydroxyacetone phosphate (DHAP or glycerone-phosphate) with glyceraldehyde 3-phosphate (G3P) to form fructose 1,6-bisphosphate (FBP) in gluconeogenesis and the reverse reaction in glycolysis. The chain is Fructose-bisphosphate aldolase from Xanthobacter flavus.